A 273-amino-acid polypeptide reads, in one-letter code: Putative phosphoenolpyruvate synthase regulatory protein (273 aa).

ADP is bound at residue 153-160 (AVSRAGKT).

The protein belongs to the pyruvate, phosphate/water dikinase regulatory protein family. PSRP subfamily.

It carries out the reaction [pyruvate, water dikinase] + ADP = [pyruvate, water dikinase]-phosphate + AMP + H(+). It catalyses the reaction [pyruvate, water dikinase]-phosphate + phosphate + H(+) = [pyruvate, water dikinase] + diphosphate. Bifunctional serine/threonine kinase and phosphorylase involved in the regulation of the phosphoenolpyruvate synthase (PEPS) by catalyzing its phosphorylation/dephosphorylation. The chain is Putative phosphoenolpyruvate synthase regulatory protein from Xanthomonas axonopodis pv. citri (strain 306).